The sequence spans 359 residues: DNA-directed RNA polymerase RPB3-11 homolog (359 aa).

This sequence in the N-terminal section; belongs to the archaeal RpoD/eukaryotic RPB3 RNA polymerase subunit family. It in the C-terminal section; belongs to the archaeal RpoL/eukaryotic RPB11/RPC19 RNA polymerase subunit family. Part of the viral DNA-directed RNA polymerase that consists of 8 polII-like subunits (RPB1, RPB2, RPB3, RPB5, RPB6, RPB7, RPB9, RPB10), a capping enzyme and a termination factor.

It is found in the host cytoplasm. It localises to the virion. In terms of biological role, component of the DNA-directed RNA polymerase (RNAP) that catalyzes the transcription in the cytoplasm of viral DNA into RNA using the four ribonucleoside triphosphates as substrates. The chain is DNA-directed RNA polymerase RPB3-11 homolog from Ornithodoros (relapsing fever ticks).